A 206-amino-acid polypeptide reads, in one-letter code: Somatotropin (206 aa).

Residues 1-22 form the signal peptide; it reads MAGLHFFPALLALLMASLQTHQ. Intrachain disulfides connect C75/C179 and C196/C204.

Belongs to the somatotropin/prolactin family.

It is found in the secreted. Its function is as follows. Growth hormone plays an important role in growth control and is involved in the regulation of several anabolic processes. Implicated as an osmoregulatory substance important for seawater adaptation. The protein is Somatotropin (gh) of Protopterus annectens (African lungfish).